A 379-amino-acid chain; its full sequence is Chaperone protein DnaJ (379 aa).

The region spanning Glu-5–Gly-69 is the J domain. The segment at Gly-135–Thr-217 adopts a CR-type zinc-finger fold. Cys-148, Cys-151, Cys-165, Cys-168, Cys-191, Cys-194, Cys-205, and Cys-208 together coordinate Zn(2+). CXXCXGXG motif repeat units follow at residues Cys-148–Gly-155, Cys-165–Gly-172, Cys-191–Gly-198, and Cys-205–Gly-212.

Belongs to the DnaJ family. As to quaternary structure, homodimer. Zn(2+) serves as cofactor.

It localises to the cytoplasm. Its function is as follows. Participates actively in the response to hyperosmotic and heat shock by preventing the aggregation of stress-denatured proteins and by disaggregating proteins, also in an autonomous, DnaK-independent fashion. Unfolded proteins bind initially to DnaJ; upon interaction with the DnaJ-bound protein, DnaK hydrolyzes its bound ATP, resulting in the formation of a stable complex. GrpE releases ADP from DnaK; ATP binding to DnaK triggers the release of the substrate protein, thus completing the reaction cycle. Several rounds of ATP-dependent interactions between DnaJ, DnaK and GrpE are required for fully efficient folding. Also involved, together with DnaK and GrpE, in the DNA replication of plasmids through activation of initiation proteins. The polypeptide is Chaperone protein DnaJ (Streptococcus agalactiae serotype III (strain NEM316)).